The primary structure comprises 91 residues: CRISPR-associated endoribonuclease Cas2 (91 aa).

Asp-14 lines the Mg(2+) pocket.

Belongs to the CRISPR-associated endoribonuclease Cas2 protein family. Homodimer, forms a heterotetramer with a Cas1 homodimer. Requires Mg(2+) as cofactor.

CRISPR (clustered regularly interspaced short palindromic repeat), is an adaptive immune system that provides protection against mobile genetic elements (viruses, transposable elements and conjugative plasmids). CRISPR clusters contain sequences complementary to antecedent mobile elements and target invading nucleic acids. CRISPR clusters are transcribed and processed into CRISPR RNA (crRNA). Functions as a ssRNA-specific endoribonuclease. Involved in the integration of spacer DNA into the CRISPR cassette. The chain is CRISPR-associated endoribonuclease Cas2 from Nanoarchaeum equitans (strain Kin4-M).